A 395-amino-acid polypeptide reads, in one-letter code: Protein PIN-LIKES 7 (395 aa).

Residues 1-8 lie on the Lumenal side of the membrane; sequence MGFLELLE. The chain crosses the membrane as a helical span at residues 9–29; sequence VASMPIVQVLLISVLGAFLAT. Residues 30–45 lie on the Cytoplasmic side of the membrane; sequence DYCSLLSADTRRSVNK. Residues 46–66 traverse the membrane as a helical segment; sequence LVFVVFTPCIMFANLAETVTL. At 67–73 the chain is on the lumenal side; it reads QDIISWW. The chain crosses the membrane as a helical span at residues 74 to 94; that stretch reads FMPINVGITFLVGGILGWLVV. Residues 95 to 106 are Cytoplasmic-facing; the sequence is KLLNPKPQLHGL. A helical transmembrane segment spans residues 107–127; the sequence is IIATCASGNMGNLMLILVPAI. Topologically, residues 128–142 are lumenal; that stretch reads CDEEGSPFGNRSVCR. A helical membrane pass occupies residues 143-163; that stretch reads SIGLSYASFSMALGGFYIWTY. Over 164 to 232 the chain is Cytoplasmic; the sequence is SYQLVRSSAT…KDLLHQILEE (69 aa). The helical transmembrane segment at 233 to 253 threads the bilayer; that stretch reads LFAPPTIGAILGFVFGATNWL. Residues 254 to 272 are Lumenal-facing; sequence RNLIIGENAPLRVIQDSVK. The chain crosses the membrane as a helical span at residues 273–293; sequence LLGEGTIPCITLILGGNLIQG. Topologically, residues 294–302 are cytoplasmic; sequence LRSSAVKKS. The chain crosses the membrane as a helical span at residues 303–323; that stretch reads VIVGVIIVRYILLPVVGVGVV. At 324–340 the chain is on the lumenal side; it reads QLAGNLGYLPPDPLFRY. A helical transmembrane segment spans residues 341–361; the sequence is VLMLQFALPPAMNISTMAQLF. The Cytoplasmic segment spans residues 362 to 369; sequence DVAQDECS. The helical transmembrane segment at 370–390 threads the bilayer; that stretch reads VIFLWTYLVASLALTVWSTIF. The Lumenal portion of the chain corresponds to 391-395; the sequence is LSILS.

This sequence belongs to the auxin efflux carrier (TC 2.A.69.2) family. As to expression, expressed in seedlings, rosette and cauline leaves, stems and flowers.

It is found in the endoplasmic reticulum membrane. Its function is as follows. Involved in cellular auxin homeostasis by regulating auxin metabolism. Regulates intracellular auxin accumulation at the endoplasmic reticulum and thus auxin availability for nuclear auxin signaling. The chain is Protein PIN-LIKES 7 from Arabidopsis thaliana (Mouse-ear cress).